We begin with the raw amino-acid sequence, 418 residues long: Sterigmatocystin 8-O-methyltransferase (418 aa).

The propeptide occupies 1–41; that stretch reads MALPSKAALVGLANTLSEQVKRYLATAGETKSPEDHKLCIE. 170–176 provides a ligand contact to substrate; the sequence is MRSGASF. Positions 206–225 are substrate binding; that stretch reads LFDYYSTVDEVRGRRFDLGM. S-adenosyl-L-methionine-binding positions include 254-255, Asp-277, 297-298, and Arg-313; these read GG and DI. His-317 (proton acceptor) is an active-site residue.

The protein belongs to the class I-like SAM-binding methyltransferase superfamily. Cation-independent O-methyltransferase family. COMT subfamily.

The protein resides in the cytoplasm. Its subcellular location is the vacuole. The enzyme catalyses sterigmatocystin + S-adenosyl-L-methionine = 8-O-methylsterigmatocystin + S-adenosyl-L-homocysteine + H(+). It carries out the reaction dihydrosterigmatocystin + S-adenosyl-L-methionine = 8-O-methyldihydrosterigmatocystin + S-adenosyl-L-homocysteine + H(+). It functions in the pathway mycotoxin biosynthesis; aflatoxin biosynthesis. In terms of biological role, sterigmatocystin 8-O-methyltransferase; part of the gene cluster that mediates the biosynthesis of aflatoxins, a group of polyketide-derived furanocoumarins, and part of the most toxic and carcinogenic compounds among the known mycotoxins. The four major aflatoxins produced by A.parasiticus are aflatoxin B1 (AFB1), aflatoxin B2 (AFB2), aflatoxin G1 (AFG1) and aflatoxin G2 (AFG2). Within the aflatoxin pathway, the O-methyltransferase aflP uses both sterigmatocystin (ST) and dihydrosterigmatocystin (DHST) as substrates to yield O-methylsterigmatocystin (OMST) and dihydro-O-methylsterigmatocystin (DHOMST), respectively. The biosynthesis of aflatoxins begins with the norsolorinic acid synthase aflC that combines a hexanoyl starter unit produced by the fatty acid synthase aflA/aflB and 7 malonyl-CoA extender units to synthesize the precursor NOR. The second step is the conversion of NOR to averantin and requires the norsolorinic acid ketoreductase aflD, which catalyzes the dehydration of norsolorinic acid to form (1'S)-averantin. The norsolorinic acid reductases aflE and aflF may also play a role in the conversion of NOR to AVN. The cytochrome P450 monooxygenase aflG then catalyzes the hydroxylation of AVN to 5'hydroxyaverantin (HAVN). The next step is performed by the 5'-hydroxyaverantin dehydrogenase aflH that transforms HAVN to 5'-oxoaverantin (OAVN) which is further converted to averufin (AVF) by aflK that plays a dual role in the pathway, as a 5'-oxoaverantin cyclase that mediates conversion of 5'-oxoaverantin, as well as a versicolorin B synthase in a later step in the pathway. The averufin oxidase aflI catalyzes the conversion of AVF to versiconal hemiacetal acetate (VHA). VHA is then the substrate for the versiconal hemiacetal acetate esterase aflJ to yield versiconal (VAL). Versicolorin B synthase aflK then converts VAL to versicolorin B (VERB) by closing the bisfuran ring of aflatoxin which is required for DNA-binding, thus giving to aflatoxin its activity as a mutagen. Then, the activity of the versicolorin B desaturase aflL leads to versicolorin A (VERA). A branch point starts from VERB since it can also be converted to dihydrodemethylsterigmatocystin (DMDHST), probably also by aflL, VERA being a precursor for aflatoxins B1 and G1, and DMDHST for aflatoxins B2 and G2. Next, the versicolorin reductase aflM and the cytochrome P450 monooxygenase aflN are involved in conversion of VERA to demethylsterigmatocystin (DMST). AflX and aflY seem also involved in this step, through probable aflX-mediated epoxide ring-opening step following versicolorin A oxidation and aflY-mediated Baeyer-Villiger oxidation required for the formation of the xanthone ring. The methyltransferase aflO then leads to the modification of DMST to sterigmatocystin (ST), and of DMDHST to dihydrosterigmatocystin (DHST). Both ST and DHST are then substrates of the O-methyltransferase aflP to yield O-methylsterigmatocystin (OMST) and dihydro-O-methylsterigmatocystin (DHOMST), respectively. Finally OMST is converted to aflatoxins B1 and G1, and DHOMST to aflatoxins B2 and G2, via the action of several enzymes including O-methylsterigmatocystin oxidoreductase aflQ, the cytochrome P450 monooxygenase aflU, but also the NADH-dependent flavin oxidoreductase nadA which is specifically required for the synthesis of AFG1. This is Sterigmatocystin 8-O-methyltransferase from Aspergillus parasiticus (strain ATCC 56775 / NRRL 5862 / SRRC 143 / SU-1).